The following is a 632-amino-acid chain: Signal-transduction and transcriptional-control protein (632 aa).

The 74-residue stretch at Thr-197 to Met-270 folds into the PAS domain. The Sigma-54 factor interaction domain maps to Ile-324–Asn-554. ATP is bound by residues Gly-352 to Glu-359 and Ala-416 to Glu-425. Positions Ile-606–Lys-625 form a DNA-binding region, H-T-H motif.

The chain is Signal-transduction and transcriptional-control protein (stc) from Clostridium beijerinckii (Clostridium MP).